Here is a 358-residue protein sequence, read N- to C-terminus: Putative hydrogenase expression/formation protein MJ0993 (358 aa).

The Fe cation site is built by C33, C61, and C64.

Belongs to the HypD family.

This chain is Putative hydrogenase expression/formation protein MJ0993, found in Methanocaldococcus jannaschii (strain ATCC 43067 / DSM 2661 / JAL-1 / JCM 10045 / NBRC 100440) (Methanococcus jannaschii).